The primary structure comprises 1192 residues: Protein WWC2 (1192 aa).

2 consecutive WW domains span residues 10–43 (LPLP…DPRD) and 57–90 (DELP…DPRK). Coiled-coil stretches lie at residues 121 to 194 (KEQR…YKEQ) and 224 to 256 (ELKS…FHLD). S286 bears the Phosphoserine mark. Residues 302–421 (LAEKVRLSLQ…KLEETTKLTT (120 aa)) adopt a coiled-coil conformation. Residues 441–462 (SSLGSLASSRGSLNTSSRGSLN) form a disordered region. The C2 domain occupies 698 to 821 (ETAQVQIGLR…FSSEVFTLWY (124 aa)). Residues 859–887 (ALLARTSAELLAVEQELAQEEEEESGQEE) are a coiled coil. Disordered regions lie at residues 873–895 (QELA…DGDW) and 911–991 (EAEV…SRQH). Over residues 875 to 885 (LAQEEEEESGQ) the composition is skewed to acidic residues. Residues 923 to 933 (TEDLSSCTSVP) show a composition bias toward polar residues. Over residues 938–951 (DGNRKESNCAKDLR) the composition is skewed to basic and acidic residues. Phosphothreonine is present on T1004. A Phosphoserine modification is found at S1022. The segment at 1031–1050 (SLFVRNSTERRSLRVKRTVC) is interaction with PRKCZ. Residues 1068 to 1144 (DLELDLQASL…EQKQGLNAEK (77 aa)) adopt a coiled-coil conformation. A compositionally biased stretch (basic and acidic residues) spans 1124–1137 (QAEKQAEQSKEEQK). The interval 1124–1143 (QAEKQAEQSKEEQKQGLNAE) is disordered.

Belongs to the WWC family. In terms of assembly, forms homodimers and heterodimers with WWC1 and WWC3. Interacts with DLC1 and PRKCZ. Interacts (via WW domains) with LATS1 and LATS2.

It localises to the cytoplasm. It is found in the cytosol. Functionally, regulator of the Hippo signaling pathway, also known as the Salvador-Warts-Hippo (SWH) pathway. Enhances phosphorylation of LATS1 and YAP1 and negatively regulates cell proliferation and organ growth due to a suppression of the transcriptional activity of YAP1, the major effector of the Hippo pathway. The sequence is that of Protein WWC2 from Homo sapiens (Human).